A 290-amino-acid polypeptide reads, in one-letter code: Inactive tau-tubulin kinase ttbk-6 (290 aa).

The 240-residue stretch at 1 to 240 (MEDHVLKKLN…FWQVMENEKI (240 aa)) folds into the Protein kinase domain. Disordered regions lie at residues 244–263 (SKFDWENEEPDMSVPPAAWE) and 268–290 (RYFQSNPLEINGPPTPAEVDFVL).

It belongs to the protein kinase superfamily. CK1 Ser/Thr protein kinase family.

This Caenorhabditis elegans protein is Inactive tau-tubulin kinase ttbk-6.